The chain runs to 540 residues: CTP synthase (540 aa).

An amidoligase domain region spans residues 1–265; sequence MVRFIFITGG…DNKVLKFFNL (265 aa). Ser13 lines the CTP pocket. Ser13 serves as a coordination point for UTP. Residues 14–19 and Asp71 each bind ATP; that span reads SLGKGL. Asp71 and Glu139 together coordinate Mg(2+). CTP contacts are provided by residues 146–148, 186–191, and Lys222; these read DIE and KTKPTQ. UTP contacts are provided by residues 186–191 and Lys222; that span reads KTKPTQ. One can recognise a Glutamine amidotransferase type-1 domain in the interval 290 to 539; it reads RIAIIAKYHK…VEAAIKYNKN (250 aa). L-glutamine is bound at residue Gly352. Cys379 (nucleophile; for glutamine hydrolysis) is an active-site residue. L-glutamine is bound by residues 380 to 383, Glu403, and Arg467; that span reads LGMQ. Active-site residues include His512 and Glu514.

Belongs to the CTP synthase family. As to quaternary structure, homotetramer.

The catalysed reaction is UTP + L-glutamine + ATP + H2O = CTP + L-glutamate + ADP + phosphate + 2 H(+). It catalyses the reaction L-glutamine + H2O = L-glutamate + NH4(+). It carries out the reaction UTP + NH4(+) + ATP = CTP + ADP + phosphate + 2 H(+). It participates in pyrimidine metabolism; CTP biosynthesis via de novo pathway; CTP from UDP: step 2/2. Its activity is regulated as follows. Allosterically activated by GTP, when glutamine is the substrate; GTP has no effect on the reaction when ammonia is the substrate. The allosteric effector GTP functions by stabilizing the protein conformation that binds the tetrahedral intermediate(s) formed during glutamine hydrolysis. Inhibited by the product CTP, via allosteric rather than competitive inhibition. In terms of biological role, catalyzes the ATP-dependent amination of UTP to CTP with either L-glutamine or ammonia as the source of nitrogen. Regulates intracellular CTP levels through interactions with the four ribonucleotide triphosphates. In Rickettsia bellii (strain RML369-C), this protein is CTP synthase.